Reading from the N-terminus, the 739-residue chain is Lysyl oxidase homolog 3A (739 aa).

A signal peptide spans 1–25 (MLRSELRDMVVAMVLWGILLPFCLS). SRCR domains lie at 38–139 (FRLA…VICK), 166–272 (LRPL…VSCV), 293–393 (MRLK…VICN), and 403–511 (MRLT…VICS). Cystine bridges form between Cys64/Cys128, Cys77/Cys138, Cys108/Cys118, Cys196/Cys261, Cys209/Cys271, Cys238/Cys248, Cys318/Cys382, Cys331/Cys392, Cys362/Cys372, Cys433/Cys497, Cys446/Cys510, and Cys479/Cys489. A glycan (N-linked (GlcNAc...) asparagine) is linked at Asn256. Residue Asn468 is glycosylated (N-linked (GlcNAc...) asparagine). N-linked (GlcNAc...) asparagine glycosylation occurs at Asn611. Positions 620 to 656 (KASFCLEDTECHEGVSKRYECANFGEQGITVGCWDLY) form a cross-link, lysine tyrosylquinone (Lys-Tyr). At Tyr656 the chain carries 2',4',5'-topaquinone.

It belongs to the lysyl oxidase family. Cu cation serves as cofactor. Requires lysine tyrosylquinone residue as cofactor. In terms of processing, the lysine tyrosylquinone cross-link (LTQ) is generated by condensation of the epsilon-amino group of a lysine with a topaquinone produced by oxidation of tyrosine.

The protein resides in the secreted. It is found in the extracellular space. The protein localises to the cytoplasm. It localises to the nucleus. It carries out the reaction L-lysyl-[protein] + O2 + H2O = (S)-2-amino-6-oxohexanoyl-[protein] + H2O2 + NH4(+). The enzyme catalyses N(6)-acetyl-L-lysyl-[protein] + O2 + H2O = acetamide + (S)-2-amino-6-oxohexanoyl-[protein] + H2O2. Protein-lysine 6-oxidase that mediates the oxidation of peptidyl lysine residues to allysine in target proteins. Catalyzes the post-translational oxidative deamination of peptidyl lysine residues in precursors of elastin and different types of collagens, a prerequisite in the formation of cross-links between collagens and elastin. Can mediate oxidation of lysine residues that are acetylated. Also able to catalyze deacetylation of lysine residues. The chain is Lysyl oxidase homolog 3A from Danio rerio (Zebrafish).